A 391-amino-acid polypeptide reads, in one-letter code: UPF0229 protein BCG9842_B4751 (391 aa).

Over residues 1–16 the composition is skewed to polar residues; the sequence is MGEENQPNYTISQENW. Disordered regions lie at residues 1-31 and 80-117; these read MGEENQPNYTISQENWSLHRKGYDDQQRHQE and HVGQGNGDSKVGDVVARDGSGGQKQKGPGKGQGAGDAA. A compositionally biased stretch (basic and acidic residues) spans 21-31; the sequence is KGYDDQQRHQE. Residues 98 to 115 show a composition bias toward gly residues; the sequence is GSGGQKQKGPGKGQGAGD.

Belongs to the UPF0229 family.

The chain is UPF0229 protein BCG9842_B4751 from Bacillus cereus (strain G9842).